The following is a 229-amino-acid chain: Endonuclease V (229 aa).

Positions 43 and 111 each coordinate Mg(2+).

This sequence belongs to the endonuclease V family. Mg(2+) serves as cofactor.

Its subcellular location is the cytoplasm. It catalyses the reaction Endonucleolytic cleavage at apurinic or apyrimidinic sites to products with a 5'-phosphate.. Its function is as follows. DNA repair enzyme involved in the repair of deaminated bases. Selectively cleaves double-stranded DNA at the second phosphodiester bond 3' to a deoxyinosine leaving behind the intact lesion on the nicked DNA. This chain is Endonuclease V, found in Rippkaea orientalis (strain PCC 8801 / RF-1) (Cyanothece sp. (strain PCC 8801)).